The following is a 344-amino-acid chain: Arginase 2, chloroplastic/mitochondrial (344 aa).

The N-terminal 26 residues, Met1–Leu26, are a transit peptide targeting the chloroplast and mitochondrion. The Mn(2+) site is built by His163, Asp187, His189, and Asp191. Residues His189 to Tyr193, Glu197 to Asn199, and Asn228 each bind substrate. Mn(2+) is bound by residues Asp272 and Asp274. Glu315 provides a ligand contact to substrate.

It belongs to the arginase family. Requires Mn(2+) as cofactor. As to expression, expressed in vasculature of roots, root tips, leaves and cotyledons.

Its subcellular location is the mitochondrion. The protein resides in the plastid. The protein localises to the chloroplast. It catalyses the reaction L-arginine + H2O = urea + L-ornithine. The enzyme catalyses agmatine + H2O = urea + putrescine. It participates in nitrogen metabolism; urea cycle; L-ornithine and urea from L-arginine: step 1/1. Its pathway is amine and polyamine biosynthesis; putrescine biosynthesis via agmatine pathway; putrescine from agmatine: step 1/1. In terms of biological role, catalyzes the hydrolysis of L-arginine to urea and L-ornithine. The latter can be utilized in the urea cycle or as a precursor for the synthesis of both polyamines and proline. Possesses agmatinase activity. Catalyzes the formation of putrescine from agmatine. This is Arginase 2, chloroplastic/mitochondrial (ARGAH2) from Arabidopsis thaliana (Mouse-ear cress).